Here is a 473-residue protein sequence, read N- to C-terminus: Photosystem II CP43 reaction center protein (473 aa).

Positions 1-14 are excised as a propeptide; it reads MKTLYSLRRFYPVE. Position 15 is an N-acetylthreonine (Thr15). Residue Thr15 is modified to Phosphothreonine. A run of 5 helical transmembrane segments spans residues 69–93, 134–155, 178–200, 255–275, and 291–312; these read LFEV…PHLA, LLGP…KDRN, KALY…RKIT, KPFA…LSYS, and WFNN…ASQA. Glu367 serves as a coordination point for [CaMn4O5] cluster. The helical transmembrane segment at 447-471 threads the bilayer; the sequence is RARAAAAGFEKGIDRDFEPVLFMTP.

The protein belongs to the PsbB/PsbC family. PsbC subfamily. In terms of assembly, PSII is composed of 1 copy each of membrane proteins PsbA, PsbB, PsbC, PsbD, PsbE, PsbF, PsbH, PsbI, PsbJ, PsbK, PsbL, PsbM, PsbT, PsbX, PsbY, PsbZ, Psb30/Ycf12, at least 3 peripheral proteins of the oxygen-evolving complex and a large number of cofactors. It forms dimeric complexes. Requires Binds multiple chlorophylls and provides some of the ligands for the Ca-4Mn-5O cluster of the oxygen-evolving complex. It may also provide a ligand for a Cl- that is required for oxygen evolution. PSII binds additional chlorophylls, carotenoids and specific lipids. as cofactor.

The protein resides in the plastid. The protein localises to the chloroplast thylakoid membrane. In terms of biological role, one of the components of the core complex of photosystem II (PSII). It binds chlorophyll and helps catalyze the primary light-induced photochemical processes of PSII. PSII is a light-driven water:plastoquinone oxidoreductase, using light energy to abstract electrons from H(2)O, generating O(2) and a proton gradient subsequently used for ATP formation. This Cucumis sativus (Cucumber) protein is Photosystem II CP43 reaction center protein.